The sequence spans 156 residues: Small ribosomal subunit protein uS7 (156 aa).

Belongs to the universal ribosomal protein uS7 family. Part of the 30S ribosomal subunit. Contacts proteins S9 and S11.

Functionally, one of the primary rRNA binding proteins, it binds directly to 16S rRNA where it nucleates assembly of the head domain of the 30S subunit. Is located at the subunit interface close to the decoding center, probably blocks exit of the E-site tRNA. The protein is Small ribosomal subunit protein uS7 of Prochlorococcus marinus (strain MIT 9312).